The primary structure comprises 165 residues: Glycine cleavage system H protein, mitochondrial (165 aa).

The transit peptide at 1–31 (MALRIWASSTAKALRLSSASRPHFSPLFRCF) directs the protein to the mitochondrion. Positions 55–137 (VATIGITDHA…YEDGWMIKVK (83 aa)) constitute a Lipoyl-binding domain. Lys-96 is subject to N6-lipoyllysine.

The protein belongs to the GcvH family. The glycine cleavage system is composed of four components that only loosely associate: the P protein (EC 1.4.4.2), the T protein (EC 2.1.2.10), the L protein (EC 1.8.1.4) and the lipoyl-bearing H protein. It depends on (R)-lipoate as a cofactor. In terms of tissue distribution, expressed in roots, stems and leaves.

Its subcellular location is the mitochondrion. The glycine cleavage system catalyzes the degradation of glycine. The H protein shuttles the methylamine group of glycine from the P protein to the T protein. In Flaveria trinervia (Clustered yellowtops), this protein is Glycine cleavage system H protein, mitochondrial (GDCSH).